Reading from the N-terminus, the 455-residue chain is Tubulin alpha chain (455 aa).

Gln11, Glu77, Ser145, Gly149, Thr150, Ser184, Asn211, and Asn233 together coordinate GTP. Residue Glu77 participates in Mg(2+) binding. Glu259 is a catalytic residue.

The protein belongs to the tubulin family. In terms of assembly, dimer of alpha and beta chains. A typical microtubule is a hollow water-filled tube with an outer diameter of 25 nm and an inner diameter of 15 nM. Alpha-beta heterodimers associate head-to-tail to form protofilaments running lengthwise along the microtubule wall with the beta-tubulin subunit facing the microtubule plus end conferring a structural polarity. Microtubules usually have 13 protofilaments but different protofilament numbers can be found in some organisms and specialized cells. The cofactor is Mg(2+).

It localises to the cytoplasm. The protein localises to the cytoskeleton. The catalysed reaction is GTP + H2O = GDP + phosphate + H(+). Its function is as follows. Tubulin is the major constituent of microtubules, a cylinder consisting of laterally associated linear protofilaments composed of alpha- and beta-tubulin heterodimers. Microtubules grow by the addition of GTP-tubulin dimers to the microtubule end, where a stabilizing cap forms. Below the cap, tubulin dimers are in GDP-bound state, owing to GTPase activity of alpha-tubulin. This chain is Tubulin alpha chain, found in Entamoeba histolytica (strain ATCC 30459 / HM-1:IMSS / ABRM).